The chain runs to 881 residues: DNA mismatch repair protein MutS (881 aa).

632–639 (GPNMGGKS) contributes to the ATP binding site.

The protein belongs to the DNA mismatch repair MutS family.

Functionally, this protein is involved in the repair of mismatches in DNA. It is possible that it carries out the mismatch recognition step. This protein has a weak ATPase activity. In Chelativorans sp. (strain BNC1), this protein is DNA mismatch repair protein MutS.